The sequence spans 1160 residues: MDTPGSLQVIAIISLLLVGGASQPATFLEKALPTDGPSLETIEHKTEMVNTTRSEEQSPVRPSKTRQQLIDETPEICANAWVIRLITEFPTELGNMSQKQKTIAIQVHNTTMTMEETVFSLVSHVNKKNYEIHNVSGICTKYQLVPGNFTCSTRKCISQTKEKRIISTTVKDTYEVYLPFAWSQKPTGGDKYPEPQIGYNTGTGRLNQWNKDEFVIKQCRKKRGKRQITVPNSTLSPTGTTDFTKFTPNPISPNSTALNELEQKTTPIGTEQPFNNEKWQNLIFGNIVTKMDPQCEAELFQQFNISDKTVQVEFKVTSLPGQNISCQAIYNTEHGINIENKNCVISLIKENRKIKAHAYITRTGSYEWYAQQVTSKGIIQEVRNLVTIVECECPIVKPLPQGGIIPLTMPMRVLTNPSPILIHSALKFDLSKFGLSPCSFSPMEWQTYITKPLKRAMHGFEVHQRKKRDLGIGLHSTLNSWWNGANSLGLTVESADRQKYDQKILKVLQNLAVQQRTDVKNQQTLGKALETPIYTITLQLADSLTAAILKHEQQQNVGITCKDIAILTVTQIATYLRDIQHEHLPVWFIEQITNQILLPVGQVIMPEITAPPILNPLIGWNQSVLVIGLTHQLTITTVQQPLYKAANMGNFQDWTPFPPFILANKTHGFSIDCPIMRNSFLCHTLPTPVKLSEWERSTSTIYQTSPQVWITPEGKACLNHRNITVQDRTCLINKPGCFIPKHPWSAGKQTIVPTQYIQQNFVPDTIDTEDNQTRVLQKEMIEAISKAKRDYGVLKQGQIALIRHHEAITTILGQEATYSIKETQALISSIEQEAWYNNLFSWYDGSVWSQLQLIIVVITCTIPLLWVLNTCLFFKLRRAIRRERDNNIVVEYQAQTRGRRTHMTEPITKKQRAKLLRHAKTNRRLPRSLRATPAVSAFEMVTFDPQEETVEINRIDPSHENNDHGGPMNMAPIISADSYALPTPYITIMLDRELLNQGMRKVITLLNDPAREVFNKAYNLVTTNHFTLAYGCDESAGWVNQHAEYMGKPVIVTLAGLVITPVGLAWIPLPQQEPLEKLFMVPNSMPHVTVAMADYHETKEMGKIVKDINNEELLLVKPQLFKWGPEGFFVACPLVIRGVVTGHSLLHIACPATAVQAEGT.

Positions M1–S22 are cleaved as a signal peptide. The Extracellular portion of the chain corresponds to Q23–L853. 13 N-linked (GlcNAc...) asparagine; by host glycosylation sites follow: N50, N95, N109, N134, N148, N232, N254, N304, N323, N621, N664, N722, and N771. Residues V230–I251 are disordered. The helical transmembrane segment at I854 to F874 threads the bilayer. Residues K875 to K1048 lie on the Cytoplasmic side of the membrane. Residues P1049 to L1069 traverse the membrane as a helical segment. Residues P1070–G1127 lie on the Extracellular side of the membrane. A helical membrane pass occupies residues F1128–I1148. Over A1149–T1160 the chain is Cytoplasmic.

The mature envelope protein (Env) consists of a trimer of SU-TM heterodimers attached by non-covalent interactions or by a labile interchain disulfide bond. Specific enzymatic cleavages in vivo yield mature proteins. Envelope glycoproteins are synthesized as an inactive precursor that is N-glycosylated and processed likely by host cell furin or by a furin-like protease in the Golgi to yield the mature SU and TM proteins. The cleavage site between SU and TM requires the minimal sequence [KR]-X-[KR]-R.

It localises to the virion membrane. Its subcellular location is the host cell membrane. In terms of biological role, (SU) attaches the virus to the host cell by binding to its receptor. This interaction triggers the refolding of the transmembrane protein (TM) and is thought to activate its fusogenic potential by unmasking its fusion peptide. Fusion occurs at the host cell plasma membrane. (TM) acts as a class I viral fusion protein. Under the current model, the protein has at least 3 conformational states: pre-fusion native state, pre-hairpin intermediate state, and post-fusion hairpin state. During viral and target cell membrane fusion, the coiled coil regions (heptad repeats) assume a trimer-of-hairpins structure, positioning the fusion peptide in close proximity to the C-terminal region of the ectodomain. The formation of this structure appears to drive apposition and subsequent fusion of viral and target cell membranes. Membranes fusion leads to delivery of the nucleocapsid into the cytoplasm. The protein is Envelope glycoprotein (env) of Walleye dermal sarcoma virus (WDSV).